Reading from the N-terminus, the 340-residue chain is MPSIRLADLAQQLDAQVHGDGDLVITGIASMHSAEPSQITFLSNSRYQEQLATCNAGAVVLTEADLPFCKSAALVVKNPYLTYARMAQIMDTTPQPAQNIAPGAVISPQATLGENVSIGANAVIESGVVLGDNVVIGAGCFIGKNTHIGAGSRLWANVSVYHEVVIGQNCLIQSGTVIGADGFGYANDRGNWIKIPQLGSVHIGDRVEIGACTTIDRGALDNTIIGNGVIIDNQCQIAHNVVIGDNTAVAGGVIMAGSLKVGRYCMIGGASVINGHMEICDKVTITGMGMVMRPITEPGLYPSGIPLQPNKVWRKTAALVMNIDGINKRLKAIERKIDKE.

The active-site Proton acceptor is the histidine 239.

This sequence belongs to the transferase hexapeptide repeat family. LpxD subfamily. Homotrimer.

It carries out the reaction a UDP-3-O-[(3R)-3-hydroxyacyl]-alpha-D-glucosamine + a (3R)-hydroxyacyl-[ACP] = a UDP-2-N,3-O-bis[(3R)-3-hydroxyacyl]-alpha-D-glucosamine + holo-[ACP] + H(+). It catalyses the reaction UDP-3-O-[(3R)-3-hydroxytetradecanoyl]-alpha-D-glucosamine + (3R)-hydroxytetradecanoyl-[ACP] = UDP-2-N,3-O-bis[(3R)-3-hydroxytetradecanoyl]-alpha-D-glucosamine + holo-[ACP] + H(+). Its pathway is glycolipid biosynthesis; lipid IV(A) biosynthesis; lipid IV(A) from (3R)-3-hydroxytetradecanoyl-[acyl-carrier-protein] and UDP-N-acetyl-alpha-D-glucosamine: step 3/6. Catalyzes the N-acylation of UDP-3-O-(hydroxytetradecanoyl)glucosamine using 3-hydroxytetradecanoyl-ACP as the acyl donor. Is involved in the biosynthesis of lipid A, a phosphorylated glycolipid that anchors the lipopolysaccharide to the outer membrane of the cell. In Yersinia enterocolitica, this protein is UDP-3-O-(3-hydroxymyristoyl)glucosamine N-acyltransferase.